A 519-amino-acid chain; its full sequence is Exodeoxyribonuclease 7 large subunit (519 aa).

The interval 500-519 (VGRGKTRKPKEEPPAQGSLL) is disordered.

It belongs to the XseA family. In terms of assembly, heterooligomer composed of large and small subunits.

The protein resides in the cytoplasm. The catalysed reaction is Exonucleolytic cleavage in either 5'- to 3'- or 3'- to 5'-direction to yield nucleoside 5'-phosphates.. Its function is as follows. Bidirectionally degrades single-stranded DNA into large acid-insoluble oligonucleotides, which are then degraded further into small acid-soluble oligonucleotides. This Cereibacter sphaeroides (strain KD131 / KCTC 12085) (Rhodobacter sphaeroides) protein is Exodeoxyribonuclease 7 large subunit.